The chain runs to 888 residues: Glutamate receptor 3 (888 aa).

The signal sequence occupies residues 1-22 (MGQSVLRAVFFLVLGLLGHSHG). Topologically, residues 23 to 546 (GFPNTISIGG…GVFSFLDPLA (524 aa)) are extracellular. N57, N260, N374, N409, and N416 each carry an N-linked (GlcNAc...) asparagine glycan. C85 and C334 are joined by a disulfide. L-glutamate is bound by residues P502, T504, and R509. A helical transmembrane segment spans residues 547-567 (YEIWMCIVFAYIGVSVVLFLV). At 568–596 (SRFSPYEWHLEDNNEEPRDPQSPPDPPNE) the chain is on the cytoplasmic side. The helical; Pore-forming intramembrane region spans 597-612 (FGIFNSLWFSLGAFMQ). The stretch at 613-615 (QGC) is an intramembrane region. A lipid anchor (S-palmitoyl cysteine) is attached at C615. Over 616-621 (DISPRS) the chain is Cytoplasmic. Residues 622 to 642 (LSGRIVGGVWWFFTLIIISSY) form a helical membrane-spanning segment. Over 643-817 (TANLAAFLTV…DKTSALSLSN (175 aa)) the chain is Extracellular. Positions 680, 681, and 731 each coordinate L-glutamate. C744 and C799 form a disulfide bridge. A helical membrane pass occupies residues 818–838 (VAGVFYILVGGLGLAMMVALI). Topologically, residues 839–888 (EFCYKSRAESKRMKLTKNTQNFKPAPATNTQNYATYREGYNVYGTESVKI) are cytoplasmic. C841 carries S-palmitoyl cysteine lipidation. Phosphotyrosine is present on residues Y871 and Y881.

This sequence belongs to the glutamate-gated ion channel (TC 1.A.10.1) family. GRIA3 subfamily. Homotetramer or heterotetramer of pore-forming glutamate receptor subunits. Tetramers may be formed by the dimerization of dimers. Interacts with PICK1, GRIP1 and GRIP2. Found in a complex with GRIA1, GRIA2, GRIA4, CNIH2, CNIH3, CACNG2, CACNG3, CACNG4, CACNG5, CACNG7 and CACNG8. Interacts with CACNG5. Found in a complex with GRIA1, GRIA2, GRIA4, DLG4, CACNG8 and CNIH2.

Its subcellular location is the cell membrane. It is found in the postsynaptic cell membrane. The protein localises to the postsynaptic density membrane. It catalyses the reaction Ca(2+)(in) = Ca(2+)(out). Ionotropic glutamate receptor that functions as a ligand-gated cation channel, gated by L-glutamate and glutamatergic agonists such as alpha-amino-3-hydroxy-5-methyl-4-isoxazolepropionic acid (AMPA), quisqualic acid, and kainic acid. L-glutamate acts as an excitatory neurotransmitter at many synapses in the central nervous system and plays an important role in fast excitatory synaptic transmission by inducing long-term potentiation. Binding of the excitatory neurotransmitter L-glutamate induces a conformation change, leading to the opening of the cation channel, and thereby converts the chemical signal to an electrical impulse upon entry of calcium. The receptor then desensitizes rapidly and enters a transient inactive state, characterized by the presence of bound agonist. In the presence of CACNG8, shows resensitization which is characterized by a delayed accumulation of current flux upon continued application of glutamate. The polypeptide is Glutamate receptor 3 (Mus musculus (Mouse)).